The primary structure comprises 201 residues: MDKFTTLEGVAAPLKIINVDTDMIIPKQYLKTIKRTGLGKGLFSEQRYKDDGSENPDFILNKPAYRGAKILVAGDNFGCGSSREHAPWALLDFGIRCVISTSFGDIFYNNCFKNGVLPIRVSQADLDKLFDDAERGSNATMTIDLQAQEIRGPDGGAIKFEIDPFRKHCLINGLDDIGLTLEKKPSIDAYETKLKTERAWA.

It belongs to the LeuD family. LeuD type 1 subfamily. Heterodimer of LeuC and LeuD.

It carries out the reaction (2R,3S)-3-isopropylmalate = (2S)-2-isopropylmalate. It participates in amino-acid biosynthesis; L-leucine biosynthesis; L-leucine from 3-methyl-2-oxobutanoate: step 2/4. In terms of biological role, catalyzes the isomerization between 2-isopropylmalate and 3-isopropylmalate, via the formation of 2-isopropylmaleate. The protein is 3-isopropylmalate dehydratase small subunit of Rhodopseudomonas palustris (strain ATCC BAA-98 / CGA009).